The chain runs to 100 residues: Urease subunit gamma (100 aa).

Belongs to the urease gamma subunit family. In terms of assembly, heterotrimer of UreA (gamma), UreB (beta) and UreC (alpha) subunits. Three heterotrimers associate to form the active enzyme. The apoenzyme interacts with an accessory complex composed of UreD, UreF and UreG, which is required for the assembly of the nickel containing metallocenter of UreC. The UreE protein may also play a direct role as a metallochaperone in nickel transfer to the urease apoprotein.

Its subcellular location is the cytoplasm. It carries out the reaction urea + 2 H2O + H(+) = hydrogencarbonate + 2 NH4(+). It participates in nitrogen metabolism; urea degradation; CO(2) and NH(3) from urea (urease route): step 1/1. With respect to regulation, the apoenzyme can be activated in vitro in the presence of nickel ions and carbon dioxide, which promotes carbamylation of 'Lys-217' of the UreC (alpha) subunit. The chain is Urease subunit gamma from Klebsiella aerogenes (Enterobacter aerogenes).